Reading from the N-terminus, the 229-residue chain is Cilia- and flagella-associated protein 95 (229 aa).

The Extracellular portion of the chain corresponds to 1–123 (MDSLDRSCQD…LLNEETVSSG (123 aa)). Residue asparagine 75 is glycosylated (N-linked (GlcNAc...) asparagine). Residues 124-140 (IIERVTGLPATGFGAVF) traverse the membrane as a helical segment. Topologically, residues 141–229 (PRHPPDWSKM…PLTSGPIVPI (89 aa)) are cytoplasmic. Residues 153 to 163 (LTTYSEDYVPP) form a mn region.

As to quaternary structure, microtubule inner protein component of sperm flagellar doublet microtubules. Interacts with MYH9. Interacts with MYH10. As to expression, expressed in undifferentiated embryonic stem cells. Expressed in airway epithelial cells.

Its subcellular location is the cytoplasm. It is found in the cytoskeleton. The protein localises to the cilium axoneme. The protein resides in the flagellum axoneme. It localises to the cell membrane. Microtubule inner protein (MIP) part of the dynein-decorated doublet microtubules (DMTs) in cilia axoneme, which is required for motile cilia beating. This Homo sapiens (Human) protein is Cilia- and flagella-associated protein 95.